Consider the following 194-residue polypeptide: Peptidyl-tRNA hydrolase (194 aa).

TRNA is bound at residue Y17. H22 serves as the catalytic Proton acceptor. TRNA contacts are provided by Y68, N70, and N116.

This sequence belongs to the PTH family. In terms of assembly, monomer.

Its subcellular location is the cytoplasm. The catalysed reaction is an N-acyl-L-alpha-aminoacyl-tRNA + H2O = an N-acyl-L-amino acid + a tRNA + H(+). Functionally, hydrolyzes ribosome-free peptidyl-tRNAs (with 1 or more amino acids incorporated), which drop off the ribosome during protein synthesis, or as a result of ribosome stalling. In terms of biological role, catalyzes the release of premature peptidyl moieties from peptidyl-tRNA molecules trapped in stalled 50S ribosomal subunits, and thus maintains levels of free tRNAs and 50S ribosomes. This Chromohalobacter salexigens (strain ATCC BAA-138 / DSM 3043 / CIP 106854 / NCIMB 13768 / 1H11) protein is Peptidyl-tRNA hydrolase.